We begin with the raw amino-acid sequence, 428 residues long: Cell division protein DamX (428 aa).

Residues 1 to 99 are disordered; sequence MDEFKPEDEL…KRKKAASKPA (99 aa). The Cytoplasmic portion of the chain corresponds to 1-103; sequence MDEFKPEDEL…AASKPASRQY (103 aa). Composition is skewed to basic and acidic residues over residues 7–36 and 50–64; these read EDEL…ERGE and DDRR…RNEE. Residues 55-87 adopt a coiled-coil conformation; sequence TRAQKERNEEPEIEEEIDESEDETVDEERVERR. Over residues 65 to 82 the composition is skewed to acidic residues; sequence PEIEEEIDESEDETVDEE. Positions 86–95 are enriched in basic residues; it reads RRPRKRKKAA. Residues 104 to 124 form a helical membrane-spanning segment; that stretch reads MMMGVGILVLLLLIIGIGSAL. Topologically, residues 125–428 are periplasmic; it reads KAPSTTSSDQ…PLRQVQADLK (304 aa). Disordered stretches follow at residues 149 to 190 and 226 to 344; these read TDQA…VATD and EPAT…KSAP. The span at 236-257 shows a compositional bias: polar residues; that stretch reads GNASRDTAKTQTAERPSTTRPA. Low complexity predominate over residues 288-334; sequence PAAPVASTKAPAATSTPAPKETATTAPVQTASPAQTTATPAAGAKTA. Residues 342-419 form the SPOR domain; sequence SAPSSHYTLQ…VQAKNPWAKP (78 aa).

The protein belongs to the DamX family. As to quaternary structure, interacts in vitro with multiple Fts proteins, including FtsQ and FtsN.

The protein localises to the cell inner membrane. Non-essential cell division protein. This is Cell division protein DamX from Escherichia coli (strain K12).